The chain runs to 216 residues: Small ribosomal subunit protein uS5 (216 aa).

Residues 51–114 (LEEEVIDVNL…DDAKFNIIKV (64 aa)) form the S5 DRBM domain.

Belongs to the universal ribosomal protein uS5 family. In terms of assembly, part of the 30S ribosomal subunit. Contacts protein S4.

With S4 and S12 plays an important role in translational accuracy. This Methanothermobacter thermautotrophicus (strain ATCC 29096 / DSM 1053 / JCM 10044 / NBRC 100330 / Delta H) (Methanobacterium thermoautotrophicum) protein is Small ribosomal subunit protein uS5.